We begin with the raw amino-acid sequence, 112 residues long: 2Fe-2S ferredoxin (112 aa).

One can recognise a 2Fe-2S ferredoxin-type domain in the interval 1–104 (MPQIVILPHA…DLVVEIPKYT (104 aa)). Residues Cys-42, Cys-48, Cys-51, and Cys-87 each contribute to the [2Fe-2S] cluster site.

It belongs to the adrenodoxin/putidaredoxin family. Requires [2Fe-2S] cluster as cofactor.

Its function is as follows. Ferredoxin are iron-sulfur proteins that transfer electrons in a wide variety of metabolic reactions. In Pseudomonas aeruginosa (strain ATCC 15692 / DSM 22644 / CIP 104116 / JCM 14847 / LMG 12228 / 1C / PRS 101 / PAO1), this protein is 2Fe-2S ferredoxin (fdx).